The sequence spans 229 residues: Cytochrome c oxidase assembly factor 7 (229 aa).

5 Sel1-like repeats span residues 34–66, 68–104, 108–145, 146–182, and 183–218; these read PEGC…EVNA, AQSC…NTQG, VDAC…EGGF, APSC…DLGH, and VWGC…DLHG. Positions 197–229 are disordered; the sequence is DGTDKDEQRAEELKNRAKDLHGQEKERQLKFGE.

This sequence belongs to the hcp beta-lactamase family.

The protein resides in the mitochondrion intermembrane space. May be required for assembly of mitochondrial respiratory chain complexes. This is Cytochrome c oxidase assembly factor 7 (coa7) from Danio rerio (Zebrafish).